Consider the following 135-residue polypeptide: Retinol-binding protein 5 (135 aa).

This sequence belongs to the calycin superfamily. Fatty-acid binding protein (FABP) family. Kidney.

Its subcellular location is the cytoplasm. In terms of biological role, intracellular transport of retinol. The sequence is that of Retinol-binding protein 5 (RBP5) from Bos taurus (Bovine).